A 492-amino-acid chain; its full sequence is Fascin-2 (492 aa).

It belongs to the fascin family. In terms of tissue distribution, expressed in the inner ear. Abundant in the utricle.

Its subcellular location is the cytoplasm. It localises to the cytoskeleton. It is found in the cell projection. The protein resides in the stereocilium. Acts as an actin bundling protein. May play a pivotal role in photoreceptor cell-specific events, such as disk morphogenesis. Important for maintaining functional hair-cell bundles in the inner ear. May stiffen the longer stereocilia of hair-cell bundles in the inner ear enabling better force transmission to tip links. The polypeptide is Fascin-2 (Fscn2) (Mus musculus (Mouse)).